We begin with the raw amino-acid sequence, 227 residues long: MSEFSLVLDDIQKSYNHGKANEINVLRGASTRIARGEIVGLIAPSGAGKSTLLQIAGLLDTADAGRVEIGGELVTGATDRARTAARRGKVGFVYQFHHLLPEFSAVENIVLPQLAHGVAAGEAEARALDLLGRVGMAARATHRPGELSGGEQQRVAFCRSLANAPALMLADEPTGNLDPATSDTVFDVLMELVRGTGLSALIATHNHELAARMDRVLRLDEGVLVSA.

One can recognise an ABC transporter domain in the interval 6 to 227 (LVLDDIQKSY…RLDEGVLVSA (222 aa)). Position 43–50 (43–50 (APSGAGKS)) interacts with ATP.

The protein belongs to the ABC transporter superfamily. Lipoprotein translocase (TC 3.A.1.125) family. As to quaternary structure, the complex is composed of two ATP-binding proteins (LolD) and two transmembrane proteins (LolC and LolE).

The protein localises to the cell inner membrane. In terms of biological role, part of the ABC transporter complex LolCDE involved in the translocation of mature outer membrane-directed lipoproteins, from the inner membrane to the periplasmic chaperone, LolA. Responsible for the formation of the LolA-lipoprotein complex in an ATP-dependent manner. The protein is Lipoprotein-releasing system ATP-binding protein LolD of Jannaschia sp. (strain CCS1).